Consider the following 173-residue polypeptide: Ribosome maturation factor RimM (173 aa).

The region spanning 95–169 is the PRC barrel domain; that stretch reads PDEFYDHELE…TIVIDPPEGL (75 aa).

This sequence belongs to the RimM family. Binds ribosomal protein uS19.

It localises to the cytoplasm. In terms of biological role, an accessory protein needed during the final step in the assembly of 30S ribosomal subunit, possibly for assembly of the head region. Essential for efficient processing of 16S rRNA. May be needed both before and after RbfA during the maturation of 16S rRNA. It has affinity for free ribosomal 30S subunits but not for 70S ribosomes. This is Ribosome maturation factor RimM from Mycolicibacterium smegmatis (strain ATCC 700084 / mc(2)155) (Mycobacterium smegmatis).